We begin with the raw amino-acid sequence, 168 residues long: Small ribosomal subunit protein uS8 (168 aa).

Positions 59–93 are not found in other S8 sequences; that stretch reads EEYKKMKELAEKSPNPKMKRYLKQLEEYNKGTQYP.

This sequence belongs to the universal ribosomal protein uS8 family. As to quaternary structure, part of the 30S ribosomal subunit. Contacts proteins S5 and S12.

One of the primary rRNA binding proteins, it binds directly to 16S rRNA central domain where it helps coordinate assembly of the platform of the 30S subunit. This Aquifex aeolicus (strain VF5) protein is Small ribosomal subunit protein uS8.